A 210-amino-acid polypeptide reads, in one-letter code: Protein GrpE (210 aa).

It belongs to the GrpE family. Homodimer.

The protein localises to the cytoplasm. In terms of biological role, participates actively in the response to hyperosmotic and heat shock by preventing the aggregation of stress-denatured proteins, in association with DnaK and GrpE. It is the nucleotide exchange factor for DnaK and may function as a thermosensor. Unfolded proteins bind initially to DnaJ; upon interaction with the DnaJ-bound protein, DnaK hydrolyzes its bound ATP, resulting in the formation of a stable complex. GrpE releases ADP from DnaK; ATP binding to DnaK triggers the release of the substrate protein, thus completing the reaction cycle. Several rounds of ATP-dependent interactions between DnaJ, DnaK and GrpE are required for fully efficient folding. In Rhizobium leguminosarum bv. trifolii (strain WSM2304), this protein is Protein GrpE.